Here is a 745-residue protein sequence, read N- to C-terminus: Isocitrate dehydrogenase [NADP] 2 (745 aa).

The NADP(+) site is built by Asn-87 and Ser-89. Residues Ser-134, Asn-137, Arg-141, Arg-147, and Lys-257 each contribute to the D-threo-isocitrate site. Asp-352 provides a ligand contact to Mg(2+). Tyr-422 and Arg-550 together coordinate D-threo-isocitrate. Mg(2+)-binding residues include Asp-551 and Asp-555. Residues Gly-587, Ser-588, Ala-589, His-592, Arg-603, Asp-605, and Arg-652 each contribute to the NADP(+) site.

It belongs to the monomeric-type IDH family. In terms of assembly, may form homotrimers. Also forms homotetramers at low salt concentration, which are dissociated into homodimers, but not into monomers, at high salt concentration (1 M). Mg(2+) is required as a cofactor.

The enzyme catalyses D-threo-isocitrate + NADP(+) = 2-oxoglutarate + CO2 + NADPH. Its function is as follows. Catalyzes the oxidative decarboxylation of isocitrate to 2-oxoglutarate and carbon dioxide with the concomitant reduction of NADP(+). Cannot use NAD(+). The polypeptide is Isocitrate dehydrogenase [NADP] 2 (Mycobacterium tuberculosis (strain ATCC 25618 / H37Rv)).